Here is a 148-residue protein sequence, read N- to C-terminus: uncharacterized protein (148 aa).

The HTH asnC-type domain maps to 3 to 64 (IDDLDRKILS…KLNYEKLGYE (62 aa)). The segment at residues 22–41 (YREIAKKLNVAVGTIYNRIK) is a DNA-binding region (H-T-H motif).

This is an uncharacterized protein from Pyrococcus furiosus (strain ATCC 43587 / DSM 3638 / JCM 8422 / Vc1).